The primary structure comprises 124 residues: Transmembrane protein 141 (124 aa).

A run of 2 helical transmembrane segments spans residues 29–48 (YAFMKGTASFILGTVGIFFG) and 60–78 (LQWNLFVSIVSSSVFSYSV). A disordered region spans residues 97 to 124 (NIPDRNSDKEEPETSADSTTTQHEDVLE).

Belongs to the TMEM141 family.

It is found in the membrane. The chain is Transmembrane protein 141 (tmem141) from Danio rerio (Zebrafish).